The chain runs to 544 residues: CTP synthase (544 aa).

The amidoligase domain stretch occupies residues 1 to 265 (MTKFIFVTGG…DNIITEQLQL (265 aa)). A CTP-binding site is contributed by Ser-13. Ser-13 contacts UTP. ATP is bound by residues 14–19 (SLGKGI) and Asp-71. Mg(2+) is bound by residues Asp-71 and Glu-139. Residues 146 to 148 (DIE), 186 to 191 (KTKPTQ), and Lys-222 contribute to the CTP site. UTP contacts are provided by residues 186 to 191 (KTKPTQ) and Lys-222. Residues 290–544 (KIAMVGKYVD…VKAALNNKKA (255 aa)) form the Glutamine amidotransferase type-1 domain. Gly-353 is an L-glutamine binding site. Residue Cys-380 is the Nucleophile; for glutamine hydrolysis of the active site. L-glutamine contacts are provided by residues 381-384 (LGMQ), Glu-404, and Arg-471. Active-site residues include His-517 and Glu-519.

The protein belongs to the CTP synthase family. In terms of assembly, homotetramer.

The enzyme catalyses UTP + L-glutamine + ATP + H2O = CTP + L-glutamate + ADP + phosphate + 2 H(+). It catalyses the reaction L-glutamine + H2O = L-glutamate + NH4(+). The catalysed reaction is UTP + NH4(+) + ATP = CTP + ADP + phosphate + 2 H(+). The protein operates within pyrimidine metabolism; CTP biosynthesis via de novo pathway; CTP from UDP: step 2/2. Its activity is regulated as follows. Allosterically activated by GTP, when glutamine is the substrate; GTP has no effect on the reaction when ammonia is the substrate. The allosteric effector GTP functions by stabilizing the protein conformation that binds the tetrahedral intermediate(s) formed during glutamine hydrolysis. Inhibited by the product CTP, via allosteric rather than competitive inhibition. Its function is as follows. Catalyzes the ATP-dependent amination of UTP to CTP with either L-glutamine or ammonia as the source of nitrogen. Regulates intracellular CTP levels through interactions with the four ribonucleotide triphosphates. The protein is CTP synthase of Neisseria meningitidis serogroup B (strain ATCC BAA-335 / MC58).